The sequence spans 548 residues: MHKGKKNYPNLITSFRMNLKKIILNHDRFSHPERWKTNALLRFTFVYIKFLFDLMIIKNPLRMVGKTYRDAVTALNSLQSNYANIMAIRQTGDRKNTMTLLEMHEWSRRIGYSASDFNKLNIVHITGTKGKGSTAAFTSSILGQYKEQLPRIGLYTSPHLKSVRERIRINGEPISEEKFAKYFFEVWDRLDSTTSSLDKFPHMIPGSKPGYFKFLTLLSFHTFIQEDCKSCVYEVGVGGELDSTNIIEKPIVCGVTLLGIDHTFMLGDTIEEIAWNKGGIFKSGAPAFTVEKQPPQGLTILKERAEERKTTLTEVPPFKQLENVKLGIAGEFQKSNASLAVMLASEILHTSNILEEKIKCSSNASIPEKFIIGLQNTKWEGRCQVLEKGKNVWYIDGAHTKDSMVAASTWFRDMVRLSKRKKILLFNQQSRDANALVNNLYSSVSPEITFDDVIFTTNVTWKSGSYSADLVSMNTSQEDVEKLKVQESLVKNWNKIDDNRAKTHVTASIEEANELIETLYDEPADIFVTGSLHLVGGLLVVFDRIDVK.

130–133 serves as a coordination point for ATP; it reads GKGS. Positions 157, 234, and 262 each coordinate Mg(2+). The ATP site is built by arginine 382 and aspartate 396.

It belongs to the folylpolyglutamate synthase family. A monovalent cation is required as a cofactor.

It is found in the mitochondrion inner membrane. The protein resides in the mitochondrion matrix. The protein localises to the cytoplasm. The catalysed reaction is (6S)-5,6,7,8-tetrahydrofolyl-(gamma-L-Glu)(n) + L-glutamate + ATP = (6S)-5,6,7,8-tetrahydrofolyl-(gamma-L-Glu)(n+1) + ADP + phosphate + H(+). It functions in the pathway cofactor biosynthesis; tetrahydrofolylpolyglutamate biosynthesis. Its function is as follows. Catalyzes conversion of folates to polyglutamate derivatives allowing concentration of folate compounds in the cell and the intracellular retention of these cofactors, which are important substrates for most of the folate-dependent enzymes that are involved in one-carbon transfer reactions involved in purine, pyrimidine and amino acid synthesis. Required for methionine synthesis and maintenance of intact mitochondrial DNA. Involved in telomere maintenance. The sequence is that of Folylpolyglutamate synthase from Saccharomyces cerevisiae (strain RM11-1a) (Baker's yeast).